The sequence spans 560 residues: DNA ligase B (560 aa).

The active-site N6-AMP-lysine intermediate is the Lys-124.

The protein belongs to the NAD-dependent DNA ligase family. LigB subfamily.

It catalyses the reaction NAD(+) + (deoxyribonucleotide)n-3'-hydroxyl + 5'-phospho-(deoxyribonucleotide)m = (deoxyribonucleotide)n+m + AMP + beta-nicotinamide D-nucleotide.. In terms of biological role, catalyzes the formation of phosphodiester linkages between 5'-phosphoryl and 3'-hydroxyl groups in double-stranded DNA using NAD as a coenzyme and as the energy source for the reaction. This is DNA ligase B from Escherichia coli O17:K52:H18 (strain UMN026 / ExPEC).